The chain runs to 467 residues: Zinc finger protein ZIC 3 (467 aa).

Positions 66-107 are disordered; sequence LSSGQSSAFTPQGSGYANALGHHHHHHHHHHHTSQVPSYGGA. A compositionally biased stretch (polar residues) spans 67 to 80; that stretch reads SSGQSSAFTPQGSG. The span at 86-98 shows a compositional bias: basic residues; it reads GHHHHHHHHHHHT. Lysine 248 is covalently cross-linked (Glycyl lysine isopeptide (Lys-Gly) (interchain with G-Cter in SUMO2)). The C2H2-type 1; atypical zinc finger occupies 251–286; sequence LSCKWIDEAQLSRPKKSCDRTFSTMHELVTHVTMEH. The C2H2-type 2; atypical zinc-finger motif lies at 295–322; the sequence is HVCYWEECPREGKSFKAKYKLVNHIRVH. 2 short sequence motifs (nuclear localization signal) span residues 297 to 322 and 330 to 352; these read CYWE…IRVH and CPFP…KRTH. 3 C2H2-type zinc fingers span residues 328-352, 358-382, and 388-410; these read FPCP…KRTH, FKCE…MHVH, and YICK…MKVH. A disordered region spans residues 404-467; it reads RKHMKVHESQ…LPPNFNEWYV (64 aa). Low complexity predominate over residues 412–428; sequence SQGSDSSPAASSGYESS. Residues 435 to 455 are compositionally biased toward polar residues; it reads SANSKDTTKTPSAVQTSTSHN.

The protein belongs to the GLI C2H2-type zinc-finger protein family. In terms of assembly, interacts (via the C2H2-type domains 3, 4 and 5) with MDFIC (via the C2H2-type domains 3, 4 and 5); the interaction reduces its transcriptional activity. Interacts with KPNA1 and KPNA6. Interacts (via C2H2-type domains 3, 4 and 5) with GLI3; the interaction enhances its transcriptional activity.

The protein localises to the nucleus. It localises to the cytoplasm. In terms of biological role, acts as a transcriptional activator. Required in the earliest stages in both axial midline development and left-right (LR) asymmetry specification. Binds to the minimal GLI-consensus sequence 5'-GGGTGGTC-3'. The polypeptide is Zinc finger protein ZIC 3 (ZIC3) (Homo sapiens (Human)).